A 383-amino-acid polypeptide reads, in one-letter code: Protein delta homolog 2 (383 aa).

The signal sequence occupies residues 1–26; the sequence is MPSGCRCLHLVCLLCILGAPGQPVRA. EGF-like domains lie at 27 to 58, 62 to 89, 91 to 129, and 131 to 172; these read DDCSSHCDLAHGCCAPDGSCRCDPGWEGLHCE, RMPGCQHGTCHQPWQCICHSGWAGKFCD, DEHICTTQSPCQNGGQCMYDGGGEYHCVCLPGFHGRDCE, and KAGP…ARCE. Residues 27–306 lie on the Extracellular side of the membrane; it reads DDCSSHCDLA…RQEAGLGEPS (280 aa). Disulfide bonds link Cys29–Cys40, Cys33–Cys46, Cys48–Cys57, Cys66–Cys71, Cys79–Cys88, Cys95–Cys107, Cys101–Cys117, Cys119–Cys128, Cys135–Cys148, Cys142–Cys160, Cys162–Cys171, Cys178–Cys189, Cys183–Cys198, Cys200–Cys209, Cys216–Cys227, Cys221–Cys236, and Cys238–Cys247. A glycan (N-linked (GlcNAc...) asparagine) is linked at Asn157. The EGF-like 5; calcium-binding domain maps to 174–210; sequence NVDDCLMRPCANGATCLDGINRFSCLCPEGFAGRFCT. Positions 212–248 constitute an EGF-like 6; calcium-binding domain; the sequence is NLDDCASRPCQRGARCRDRVHDFDCLCPSGYGGKTCE. A helical transmembrane segment spans residues 307-327; sequence LVALVVFGALTAALVLATVLL. The Cytoplasmic segment spans residues 328-383; sequence TLRAWRRGVCPPGPCCYPAPHYAPACQDQECQVSMLPAGLPLPRDLPPEPGKTTAL.

The protein localises to the membrane. In terms of biological role, regulates adipogenesis. The protein is Protein delta homolog 2 (DLK2) of Homo sapiens (Human).